A 355-amino-acid chain; its full sequence is Fructose-1,6-bisphosphatase class 1 (355 aa).

Mg(2+)-binding residues include Glu94, Asp116, Leu118, and Asp119. Residues 119–122, Asn211, and 263–265 contribute to the substrate site; these read DGSS and YLY. Glu283 is a binding site for Mg(2+).

It belongs to the FBPase class 1 family. Homotetramer. Mg(2+) serves as cofactor.

The protein localises to the cytoplasm. It catalyses the reaction beta-D-fructose 1,6-bisphosphate + H2O = beta-D-fructose 6-phosphate + phosphate. It participates in carbohydrate biosynthesis; Calvin cycle. The polypeptide is Fructose-1,6-bisphosphatase class 1 (Rhodospirillum rubrum (strain ATCC 11170 / ATH 1.1.1 / DSM 467 / LMG 4362 / NCIMB 8255 / S1)).